A 424-amino-acid chain; its full sequence is Envelope glycoprotein M (424 aa).

Residues 1–23 are Intravirion-facing; it reads MASRARMERNYRGLSHIDYVHKK. The chain crosses the membrane as a helical span at residues 24–44; that stretch reads MWVVQAVCFGIAVLVFFGTLV. At 45 to 94 the chain is on the virion surface side; sequence AASINLTEGFPCFFAAVVDYRTVNTTLVHTGLTYPRLGGVVPVLFFQTKA. The chain crosses the membrane as a helical span at residues 95-115; sequence VVFFFYATSIVFVFLVCYITV. The Intravirion portion of the chain corresponds to 116-143; it reads GAIISSKKHVGAAYMGSGAFVFSLMASP. The helical transmembrane segment at 144–164 threads the bilayer; sequence LTILLGTVSIWLLQAVVIVLA. The Virion surface portion of the chain corresponds to 165–166; sequence HK. The chain crosses the membrane as a helical span at residues 167 to 187; that stretch reads LIVLAAAVYLVHFSTITFFYG. The Intravirion segment spans residues 188–226; sequence YFCGRGVDSKVYAEDISSAKDIDGSLHKLIGNVRAMMVN. Residues 227–247 traverse the membrane as a helical segment; that stretch reads LLSIVYSIILIMSSLMFGMLL. At 248–261 the chain is on the virion surface side; the sequence is ANSFTLKFWHVIVT. The chain crosses the membrane as a helical span at residues 262–282; sequence VLITTSVLTLIYLLVIEFLIA. Residue R283 is a topological domain, intravirion. Residues 284–304 form a helical membrane-spanning segment; that stretch reads YVHIILGAYIGLLIGYGMLWT. The Virion surface portion of the chain corresponds to 305-327; it reads TTCDYVNRFYYAMGANASNLRIA. The chain crosses the membrane as a helical span at residues 328-348; sequence CHSVLAVFTVLILLAMVVRLI. The Intravirion portion of the chain corresponds to 349–424; sequence RASLYHRRRS…YSGSESEWDD (76 aa). A disordered region spans residues 382–424; sequence SYKQRGSQSEDERALTQSRSAEASDEDTIYDRVYSGSESEWDD.

It belongs to the herpesviridae glycoprotein M family. Interacts (via N-terminus) with gN (via N-terminus). The gM-gN heterodimer forms the gCII complex.

Its subcellular location is the virion membrane. It is found in the host Golgi apparatus. The protein localises to the host trans-Golgi network. The protein resides in the host endosome membrane. It localises to the host nucleus inner membrane. In terms of biological role, envelope glycoprotein important for virion assembly and egress. Plays a role in the correct incorporation of gH-gL into virion membrane. Directs the glycoprotein N (gN) to the host trans-Golgi network. In Gallid herpesvirus 2 (strain Chicken/Md5/ATCC VR-987) (GaHV-2), this protein is Envelope glycoprotein M.